Consider the following 65-residue polypeptide: Large ribosomal subunit protein bL28 (65 aa).

Residues 1–21 (MPGRDQLTGQKALSGNKRSHA) form a disordered region.

The protein belongs to the bacterial ribosomal protein bL28 family.

This Metamycoplasma arthritidis (strain 158L3-1) (Mycoplasma arthritidis) protein is Large ribosomal subunit protein bL28.